The primary structure comprises 189 residues: Putative manganese efflux pump MntP (189 aa).

6 consecutive transmembrane segments (helical) span residues 3-23 (PVSL…AAIG), 41-61 (IIFG…GQAA), 65-85 (VADW…LHMI), 106-128 (WILA…GLAF), 141-161 (GLAT…LGAV), and 168-188 (MVGG…HLSA).

This sequence belongs to the MntP (TC 9.B.29) family.

Its subcellular location is the cell inner membrane. In terms of biological role, probably functions as a manganese efflux pump. This is Putative manganese efflux pump MntP from Pseudomonas aeruginosa (strain UCBPP-PA14).